Here is a 169-residue protein sequence, read N- to C-terminus: Cell cycle link protein (169 aa).

The segment at 9–22 is binding to host SKP1 protein; that stretch reads LPEELRQKIVHDHL. The short motif at 110 to 114 is the LXCXE motif, interaction with host RBR element; it reads LLCRE.

The protein belongs to the nanovirus Clink protein family. Interacts with host SKP1. Interacts (via LXCXE domain) with host retinoblastoma-related protein 1 (RBR1). Interacts (via LXCXE domain) with retinoblastoma-related proteins (RBR).

In terms of biological role, interacts with and disrupts the function of host retinoblastoma-related proteins RBR, which are key regulators of the cell cycle. Induces transcriptional activation of E2F-regulated S-phase and G2/M-phase-specific genes. Inactivation of the ability of RBR to arrest the cell cycle leads to the stimulation of viral DNA replication. This Cicer arietinum (Chickpea) protein is Cell cycle link protein (DNA-C).